Here is a 304-residue protein sequence, read N- to C-terminus: Non-structural maintenance of chromosomes element 3 homolog (304 aa).

Disordered stretches follow at residues 1–82 (MLQK…PRSQ) and 285–304 (ALADEENRARPQPSGPAPSS). The segment covering 32-43 (AGEDARVLRDGF) has biased composition (basic and acidic residues). 3 positions are modified to phosphoserine: serine 57, serine 60, and serine 64. Residues 60–80 (SQGPSPQGARRAQAAPAVGPR) show a composition bias toward low complexity. The interaction with NSMCE1 stretch occupies residues 78–304 (GPRSQKQLEL…PQPSGPAPSS (227 aa)). Residues 85 to 285 (LELKVSELVQ…KDWPAQYCEA (201 aa)) enclose the MAGE domain.

In terms of assembly, component of the SMC5-SMC6 complex which consists at least of SMC5, SMC6, NSMCE2, NSMCE1, NSMCE4A or EID3 and NSMCE3. NSMCE1, NSMCE4A or EID3 and NSMCE3 probably form a subcomplex that bridges the head domains of the SMC5:SMC6 heterodimer. Interacts with PJA1. Interacts with E2F1 (via C-terminus). Interacts with NGFR (via C-terminus). Interacts with NSMCE1. Interacts with NSMCE4. Interacts with SMC6. Interacts with EID3. Ubiquitous.

The protein localises to the cytoplasm. The protein resides in the nucleus. It localises to the chromosome. It is found in the telomere. Component of the SMC5-SMC6 complex, a complex involved in repair of DNA double-strand breaks by homologous recombination. The complex may promote sister chromatid homologous recombination by recruiting the SMC1-SMC3 cohesin complex to double-strand breaks. The complex is required for telomere maintenance via recombination in ALT (alternative lengthening of telomeres) cell lines and mediates sumoylation of shelterin complex (telosome) components which is proposed to lead to shelterin complex disassembly in ALT-associated PML bodies (APBs). In vitro enhances ubiquitin ligase activity of NSMCE1. Proposed to act through recruitment and/or stabilization of the Ubl-conjugating enzyme (E2) at the E3:substrate complex. May be a growth suppressor that facilitates the entry of the cell into cell cycle arrest. The protein is Non-structural maintenance of chromosomes element 3 homolog of Homo sapiens (Human).